Consider the following 486-residue polypeptide: Protein kinase C and casein kinase substrate in neurons protein 2 (486 aa).

Residues 11 to 282 form the F-BAR domain; that stretch reads VEVSSDSFWE…SIKAADAVED (272 aa). Residues 25–274 are a coiled coil; that stretch reads KRTVKRIDDG…TIYRELEQSI (250 aa). The residue at position 53 (Lys-53) is an N6-acetyllysine. Phosphoserine is present on Ser-273. A Phosphoserine; by PKC modification is found at Ser-313. The tract at residues 315-426 is disordered; it reads REKKKAVDGV…NPFDEDTTSG (112 aa). Polar residues predominate over residues 327–362; that stretch reads TGINQTGDQSGQNKPGSNLSVPSNPAQSTQLQSSYN. The NPF1 signature appears at 362-364; sequence NPF. Residue Ser-373 is modified to Phosphoserine; by IKKB. The segment covering 384–396 has biased composition (polar residues); it reads NVSSYEKTQTYPT. Ser-399 carries the post-translational modification Phosphoserine. The segment covering 404–416 has biased composition (polar residues); the sequence is NNPFSSTDANGDS. Positions 405–407 match the NPF2 motif; it reads NPF. Residues 417 to 419 carry the NPF3 motif; that stretch reads NPF. Residues 426-486 enclose the SH3 domain; sequence GTEVRVRALY…YPANYVEAIQ (61 aa). Phosphoserine is present on Ser-446.

It belongs to the PACSIN family. Homodimer. May form heterooligomers with other PACSINs. Interacts (via NPF motifs) with EHD1 (via EH domain). Interacts (via NPF motifs) with EHD2 (via EH domain); this interaction probably stabilizes the caveolae. Interacts with EHD3. Interacts (via the SH3 domain) with MICALL1. Interacts with RAC1. Interacts (via SH3 domain) with DNM1, SYN1, SYNJ1 and WASL. Interacts (via F-BAR domain) with CAV1; this interaction induces membrane tubulation. Interacts with TRPV4. Forms a complex with EHD4 and MICALL1; the complex controls CDH5 trafficking and coordinates angiogenesis. Phosphorylated by casein kinase 2 (CK2). Phosphorylation by PKC probably decreases the membrane binding and tubulation capacities of PACSIN2, thereby modulating the lifetime of caveolae. Widely expressed (at protein level).

The protein resides in the cytoplasm. It localises to the cytoskeleton. It is found in the cytoplasmic vesicle membrane. The protein localises to the cell projection. Its subcellular location is the ruffle membrane. The protein resides in the early endosome. It localises to the recycling endosome membrane. It is found in the cell membrane. The protein localises to the membrane. Its subcellular location is the caveola. The protein resides in the cell junction. It localises to the adherens junction. Regulates the morphogenesis and endocytosis of caveolae. Lipid-binding protein that is able to promote the tubulation of the phosphatidic acid-containing membranes it preferentially binds. Plays a role in intracellular vesicle-mediated transport. Involved in the endocytosis of cell-surface receptors like the EGF receptor, contributing to its internalization in the absence of EGF stimulus. Essential for endothelial organization in sprouting angiogenesis, modulates CDH5-based junctions. Facilitates endothelial front-rear polarity during migration by recruiting EHD4 and MICALL1 to asymmetric adherens junctions between leader and follower cells. This Mus musculus (Mouse) protein is Protein kinase C and casein kinase substrate in neurons protein 2 (Pacsin2).